A 1080-amino-acid polypeptide reads, in one-letter code: ATP-dependent helicase/deoxyribonuclease subunit B (1080 aa).

The protein belongs to the helicase family. AddB/RexB type 2 subfamily. In terms of assembly, heterodimer of AddA and RexB. Mg(2+) serves as cofactor.

Its function is as follows. The heterodimer acts as both an ATP-dependent DNA helicase and an ATP-dependent, dual-direction single-stranded exonuclease. Recognizes the chi site generating a DNA molecule suitable for the initiation of homologous recombination. This subunit has 5' -&gt; 3' nuclease activity but not helicase activity. This chain is ATP-dependent helicase/deoxyribonuclease subunit B, found in Streptococcus mutans serotype c (strain ATCC 700610 / UA159).